The sequence spans 344 residues: Dihydroorotate dehydrogenase (quinone) (344 aa).

Residues 62-66 and T86 contribute to the FMN site; that span reads AGLDK. K66 is a binding site for substrate. Position 111–115 (111–115) interacts with substrate; it reads NRMGF. Residues N139 and N172 each contribute to the FMN site. N172 serves as a coordination point for substrate. Catalysis depends on S175, which acts as the Nucleophile. N177 is a substrate binding site. Positions 217 and 245 each coordinate FMN. Position 246–247 (246–247) interacts with substrate; the sequence is NT. FMN-binding positions include G268, G297, and 318 to 319; that span reads YS.

Belongs to the dihydroorotate dehydrogenase family. Type 2 subfamily. As to quaternary structure, monomer. Requires FMN as cofactor.

It localises to the cell membrane. It carries out the reaction (S)-dihydroorotate + a quinone = orotate + a quinol. Its pathway is pyrimidine metabolism; UMP biosynthesis via de novo pathway; orotate from (S)-dihydroorotate (quinone route): step 1/1. Functionally, catalyzes the conversion of dihydroorotate to orotate with quinone as electron acceptor. In Chromobacterium violaceum (strain ATCC 12472 / DSM 30191 / JCM 1249 / CCUG 213 / NBRC 12614 / NCIMB 9131 / NCTC 9757 / MK), this protein is Dihydroorotate dehydrogenase (quinone).